Reading from the N-terminus, the 291-residue chain is MEYPWDDLTLAFSRTSMFPFFDIAHYLVSVMALKQRPGAVAAAWSNPLSSWLSAMLHCFGGGILSCILLAEPPLKFLTNHTNILLASSIWYIVFFCPRDLVSQGYSYQPIQLLAAGMKEVTRTWKIVGGVAHANGYYRNGWIVMIAVGWARGAGGAIITACEQLLKGDWKPEGDEWLKMSFPCKVTLLGSIMFTFQHTRHLAISKHDLMFLYTIFLVTIKVTMMMTKDAAVTLTPFEDTLTRMLFGRQQQQFSLSEKKAEVKPSSNGSASSASKRGTEPPSSAKRHAKKED.

Residues 1–16 (MEYPWDDLTLAFSRTS) lie on the Lumenal side of the membrane. A helical transmembrane segment spans residues 17-33 (MFPFFDIAHYLVSVMAL). Topologically, residues 34–47 (KQRPGAVAAAWSNP) are cytoplasmic. The helical transmembrane segment at 48–69 (LSSWLSAMLHCFGGGILSCILL) threads the bilayer. Residues 70–80 (AEPPLKFLTNH) are Lumenal-facing. A helical membrane pass occupies residues 81–99 (TNILLASSIWYIVFFCPRD). Over 100–103 (LVSQ) the chain is Cytoplasmic. Residues 104-122 (GYSYQPIQLLAAGMKEVTR) traverse the membrane as a helical segment. A 1,2-diacyl-sn-glycero-3-phospho-(1D-myo-inositol-4,5-bisphosphate)-binding residues include Lys118 and Arg122. Residues 123–138 (TWKIVGGVAHANGYYR) lie on the Lumenal side of the membrane. A helical transmembrane segment spans residues 139-156 (NGWIVMIAVGWARGAGGA). The Cytoplasmic segment spans residues 157–179 (IITACEQLLKGDWKPEGDEWLKM). A helical transmembrane segment spans residues 180-197 (SFPCKVTLLGSIMFTFQH). The Lumenal portion of the chain corresponds to 198-206 (TRHLAISKH). The helical transmembrane segment at 207 to 225 (DLMFLYTIFLVTIKVTMMM) threads the bilayer. The Cytoplasmic segment spans residues 226–291 (TKDAAVTLTP…SAKRHAKKED (66 aa)). Residues 254-291 (LSEKKAEVKPSSNGSASSASKRGTEPPSSAKRHAKKED) are disordered. Positions 264–273 (SSNGSASSAS) are enriched in low complexity.

It belongs to the TMEM38 family. As to quaternary structure, homotrimer; conformation seems to be controled by binding to diacylglycerol (DAG).

It localises to the endoplasmic reticulum membrane. It carries out the reaction K(+)(in) = K(+)(out). With respect to regulation, channel activity is activated by increased cytosolic Ca(2+) levels and blocked by luminal high Ca(2+) levels. Its function is as follows. Intracellular monovalent cation channel required for maintenance of rapid intracellular calcium release. Acts as a potassium counter-ion channel that functions in synchronization with calcium release from intracellular stores. Activated by increased cytosolic Ca(2+) levels. The polypeptide is Trimeric intracellular cation channel type B (Tmem38b) (Rattus norvegicus (Rat)).